The following is a 144-amino-acid chain: Large-conductance mechanosensitive channel (144 aa).

2 consecutive transmembrane segments (helical) span residues valine 14–phenylalanine 34 and glycine 81–isoleucine 101.

It belongs to the MscL family. As to quaternary structure, homopentamer.

It localises to the cell inner membrane. Functionally, channel that opens in response to stretch forces in the membrane lipid bilayer. May participate in the regulation of osmotic pressure changes within the cell. In Bdellovibrio bacteriovorus (strain ATCC 15356 / DSM 50701 / NCIMB 9529 / HD100), this protein is Large-conductance mechanosensitive channel.